We begin with the raw amino-acid sequence, 147 residues long: Leghemoglobin 8 (147 aa).

The Globin domain maps to 2–147; sequence GFTEKQESLV…LAASIKKSMS (146 aa). A nitrated tyrosine mark is found at Tyr25 and Tyr30. Ser45 is a binding site for heme b. Position 45 is a phosphoserine (Ser45). His62 contacts O2. Heme b is bound by residues Lys65, His94, and Lys97. Tyr135 bears the Nitrated tyrosine mark.

This sequence belongs to the plant globin family. As to quaternary structure, monomer. Interacts with CAS31 in the cytoplasm; this interaction leads to its protection from denaturation under thermal and drought stresses. Nitrated in effective nodules and particularly in hypoxic conditions; this mechanism may play a protective role in the symbiosis by buffering toxic peroxynitrite NO(2)(-). Nitration level decrease during nodule senescence. In terms of processing, phosphorylation at Ser-45 disrupts the molecular environment of its porphyrin ring oxygen binding pocket, thus leading to a reduced oxygen consumption and to the delivery of oxygen O(2) to symbiosomes. In terms of tissue distribution, root nodules.

It localises to the cytoplasm. Its subcellular location is the nucleus. Leghemoglobin that reversibly binds oxygen O(2) through a pentacoordinated heme iron. In root nodules, facilitates the diffusion of oxygen to the bacteroids while preventing the bacterial nitrogenase from being inactivated by buffering dioxygen, nitric oxide and carbon monoxide, and promoting the formation of reactive oxygen species (ROS, e.g. H(2)O(2)). This role is essential for symbiotic nitrogen fixation (SNF). The chain is Leghemoglobin 8 from Medicago truncatula (Barrel medic).